Here is a 100-residue protein sequence, read N- to C-terminus: MSRLFDSRLADIIRKPVITEKATNALDLNQYTFEVDHRAAKPQIKAAIEALFDVKVIGINTMNPPRRTRRVGKFSGKRSQIKKAIVRLAEGDKIQLFPES.

This sequence belongs to the universal ribosomal protein uL23 family. As to quaternary structure, part of the 50S ribosomal subunit. Contacts protein L29, and trigger factor when it is bound to the ribosome.

One of the early assembly proteins it binds 23S rRNA. One of the proteins that surrounds the polypeptide exit tunnel on the outside of the ribosome. Forms the main docking site for trigger factor binding to the ribosome. The sequence is that of Large ribosomal subunit protein uL23 from Prochlorococcus marinus subsp. pastoris (strain CCMP1986 / NIES-2087 / MED4).